Here is a 67-residue protein sequence, read N- to C-terminus: Kappa-scoloptoxin(04)-Ssd1b (67 aa).

The first 24 residues, 1–24 (MKKTCVVSVFLVLLLLKFHDLSMG), serve as a signal peptide directing secretion. A propeptide spanning residues 25-36 (EEISPLKKVARR) is cleaved from the precursor. 2 cysteine pairs are disulfide-bonded: C44–C55 and C49–C62.

In terms of tissue distribution, expressed by the venom gland.

It localises to the secreted. This Scolopendra dehaani (Thai centipede) protein is Kappa-scoloptoxin(04)-Ssd1b.